A 358-amino-acid chain; its full sequence is Fructose-bisphosphate aldolase 1, cytoplasmic (358 aa).

Arg-39 is a binding site for substrate. Catalysis depends on Glu-183, which acts as the Proton acceptor. Lys-225 (schiff-base intermediate with dihydroxyacetone-P) is an active-site residue. Substrate is bound by residues 266–268 (SGG) and Arg-298.

Belongs to the class I fructose-bisphosphate aldolase family. As to quaternary structure, homotetramer. As to expression, expressed in callus.

Its subcellular location is the cytoplasm. The protein localises to the cytosol. It catalyses the reaction beta-D-fructose 1,6-bisphosphate = D-glyceraldehyde 3-phosphate + dihydroxyacetone phosphate. It participates in carbohydrate degradation; glycolysis; D-glyceraldehyde 3-phosphate and glycerone phosphate from D-glucose: step 4/4. Fructose-bisphosphate aldolase that plays a key role in glycolysis and gluconeogenesis. Involved in gibberellin-mediated root growth. May be regulated by CDPK13. Associates with vacuolar proton ATPase (V-ATPase) and may regulate the V-ATPase-mediated control of root cell elongation. The chain is Fructose-bisphosphate aldolase 1, cytoplasmic from Oryza sativa subsp. japonica (Rice).